We begin with the raw amino-acid sequence, 157 residues long: Crossover junction endodeoxyribonuclease RuvC (157 aa).

Active-site residues include Asp-7, Glu-67, and Asp-140. Positions 7, 67, and 140 each coordinate Mg(2+).

Belongs to the RuvC family. In terms of assembly, homodimer which binds Holliday junction (HJ) DNA. The HJ becomes 2-fold symmetrical on binding to RuvC with unstacked arms; it has a different conformation from HJ DNA in complex with RuvA. In the full resolvosome a probable DNA-RuvA(4)-RuvB(12)-RuvC(2) complex forms which resolves the HJ. The cofactor is Mg(2+).

The protein localises to the cytoplasm. The catalysed reaction is Endonucleolytic cleavage at a junction such as a reciprocal single-stranded crossover between two homologous DNA duplexes (Holliday junction).. The RuvA-RuvB-RuvC complex processes Holliday junction (HJ) DNA during genetic recombination and DNA repair. Endonuclease that resolves HJ intermediates. Cleaves cruciform DNA by making single-stranded nicks across the HJ at symmetrical positions within the homologous arms, yielding a 5'-phosphate and a 3'-hydroxyl group; requires a central core of homology in the junction. The consensus cleavage sequence is 5'-(A/T)TT(C/G)-3'. Cleavage occurs on the 3'-side of the TT dinucleotide at the point of strand exchange. HJ branch migration catalyzed by RuvA-RuvB allows RuvC to scan DNA until it finds its consensus sequence, where it cleaves and resolves the cruciform DNA. The chain is Crossover junction endodeoxyribonuclease RuvC from Rickettsia bellii (strain OSU 85-389).